The chain runs to 155 residues: Small ribosomal subunit protein uS7cz/uS7cy (155 aa).

This sequence belongs to the universal ribosomal protein uS7 family. Part of the 30S ribosomal subunit.

It localises to the plastid. Its subcellular location is the chloroplast. One of the primary rRNA binding proteins, it binds directly to 16S rRNA where it nucleates assembly of the head domain of the 30S subunit. This is Small ribosomal subunit protein uS7cz/uS7cy (rps7-A) from Vitis vinifera (Grape).